We begin with the raw amino-acid sequence, 290 residues long: Small ribosomal subunit biogenesis GTPase RsgA (290 aa).

Residues 62-213 (KNSLVRPPIV…IADTPGFSSL (152 aa)) enclose the CP-type G domain. Residues 111–114 (SKMD) and 156–164 (GQTGVGKST) each bind GTP. Zn(2+) contacts are provided by C237, C242, H244, and C250.

This sequence belongs to the TRAFAC class YlqF/YawG GTPase family. RsgA subfamily. In terms of assembly, monomer. Associates with 30S ribosomal subunit, binds 16S rRNA. Zn(2+) is required as a cofactor.

Its subcellular location is the cytoplasm. In terms of biological role, one of several proteins that assist in the late maturation steps of the functional core of the 30S ribosomal subunit. Helps release RbfA from mature subunits. May play a role in the assembly of ribosomal proteins into the subunit. Circularly permuted GTPase that catalyzes slow GTP hydrolysis, GTPase activity is stimulated by the 30S ribosomal subunit. The chain is Small ribosomal subunit biogenesis GTPase RsgA from Streptococcus pyogenes serotype M6 (strain ATCC BAA-946 / MGAS10394).